The primary structure comprises 377 residues: Palmitoyltransferase ZDHHC16 (377 aa).

At 1–79 the chain is on the cytoplasmic side; sequence MRGQWSLLLG…WLVDNVIRWC (79 aa). Residues 80 to 100 form a helical membrane-spanning segment; that stretch reads GVVFVVLVIVLTSSIVAIAYL. Topologically, residues 101-116 are lumenal; it reads CVLPLILQTYSVPRLC. The chain crosses the membrane as a helical span at residues 117–137; sequence WHFFYSHWNLILIVFHYYQAI. The Cytoplasmic portion of the chain corresponds to 138-198; the sequence is TTPPGYPPQG…NNCVGHYNHR (61 aa). Residues 155 to 205 form the DHHC domain; sequence SICKKCINPKPARTHHCSICNRCVLKMDHHCPWLNNCVGHYNHRYFFSFCF. Catalysis depends on Cys-185, which acts as the S-palmitoyl cysteine intermediate. A helical membrane pass occupies residues 199-219; the sequence is YFFSFCFFMTLGCVYCSYGSW. Over 220–266 the chain is Lumenal; it reads DLFREAYAAIEKMKQLDKNKLQAVANQTYHQTPPPTFSFRERVTHKS. Residues 267 to 287 traverse the membrane as a helical segment; that stretch reads LVYLWFLCSSVALALGALTIW. The Cytoplasmic portion of the chain corresponds to 288 to 377; that stretch reads HAVLISRGET…TAHSASVMAV (90 aa).

It belongs to the DHHC palmitoyltransferase family. Interacts with ABL1. Interacts with COPS5/JAB1.

It is found in the endoplasmic reticulum membrane. The catalysed reaction is L-cysteinyl-[protein] + hexadecanoyl-CoA = S-hexadecanoyl-L-cysteinyl-[protein] + CoA. Its function is as follows. Palmitoyl acyltransferase that mediates palmitoylation of proteins such as PLN and ZDHHC6. Required during embryonic heart development and cardiac function, possibly by mediating palmitoylation of PLN, thereby affecting PLN phosphorylation and homooligomerization. Also required for eye development. Palmitoylates ZDHHC6, affecting the quaternary assembly of ZDHHC6, its localization, stability and function. May play a role in DNA damage response. May be involved in apoptosis regulation. Involved in the proliferation of neural stem cells by regulating the FGF/ERK pathway. The polypeptide is Palmitoyltransferase ZDHHC16 (Bos taurus (Bovine)).